The following is a 172-amino-acid chain: Adenine phosphoribosyltransferase (172 aa).

The protein belongs to the purine/pyrimidine phosphoribosyltransferase family. Homodimer.

The protein resides in the cytoplasm. It carries out the reaction AMP + diphosphate = 5-phospho-alpha-D-ribose 1-diphosphate + adenine. It functions in the pathway purine metabolism; AMP biosynthesis via salvage pathway; AMP from adenine: step 1/1. Catalyzes a salvage reaction resulting in the formation of AMP, that is energically less costly than de novo synthesis. The polypeptide is Adenine phosphoribosyltransferase (Synechococcus sp. (strain CC9605)).